The following is a 219-amino-acid chain: MKKDLTLYETRVVGVLLEKEITTPDQYPLSLNALVNACNQKSNRHPVLELDEATVRQTLEALQRKDLVKGSSYGSRVEKYHHRFCNTEFGELKLDAQQVAVVCELLLRGPQTPGELRSRASRMAEFSDVQATESTLKRLLEHKLGPLVVMLPREPGKRESRYMHMFSSDIEPVETAAPSDSGSISAYKAKITDLEVRLEALQEENDALKKKLRQLGQVV.

It belongs to the UPF0502 family.

In Hahella chejuensis (strain KCTC 2396), this protein is UPF0502 protein HCH_06091.